The following is a 474-amino-acid chain: Glutamate--tRNA ligase (474 aa).

Residues 18-28 carry the 'HIGH' region motif; sequence PSPTGFLHIGG. The 'KMSKS' region signature appears at 244-248; sequence KLSKR. An ATP-binding site is contributed by K247.

This sequence belongs to the class-I aminoacyl-tRNA synthetase family. Glutamate--tRNA ligase type 1 subfamily. Monomer.

Its subcellular location is the cytoplasm. The catalysed reaction is tRNA(Glu) + L-glutamate + ATP = L-glutamyl-tRNA(Glu) + AMP + diphosphate. Catalyzes the attachment of glutamate to tRNA(Glu) in a two-step reaction: glutamate is first activated by ATP to form Glu-AMP and then transferred to the acceptor end of tRNA(Glu). The chain is Glutamate--tRNA ligase from Caulobacter sp. (strain K31).